The chain runs to 290 residues: 4-hydroxy-tetrahydrodipicolinate synthase (290 aa).

Thr-44 contacts pyruvate. Tyr-132 acts as the Proton donor/acceptor in catalysis. Lys-160 (schiff-base intermediate with substrate) is an active-site residue. Ile-202 is a binding site for pyruvate.

It belongs to the DapA family. In terms of assembly, homotetramer; dimer of dimers.

Its subcellular location is the cytoplasm. It catalyses the reaction L-aspartate 4-semialdehyde + pyruvate = (2S,4S)-4-hydroxy-2,3,4,5-tetrahydrodipicolinate + H2O + H(+). The protein operates within amino-acid biosynthesis; L-lysine biosynthesis via DAP pathway; (S)-tetrahydrodipicolinate from L-aspartate: step 3/4. Functionally, catalyzes the condensation of (S)-aspartate-beta-semialdehyde [(S)-ASA] and pyruvate to 4-hydroxy-tetrahydrodipicolinate (HTPA). This chain is 4-hydroxy-tetrahydrodipicolinate synthase, found in Legionella pneumophila subsp. pneumophila (strain Philadelphia 1 / ATCC 33152 / DSM 7513).